We begin with the raw amino-acid sequence, 963 residues long: Phosphoenolpyruvate carboxylase (963 aa).

A Phosphoserine modification is found at serine 11. Residues histidine 172 and lysine 600 contribute to the active site.

This sequence belongs to the PEPCase type 1 family. As to quaternary structure, homotetramer. The cofactor is Mg(2+).

The protein localises to the cytoplasm. The catalysed reaction is oxaloacetate + phosphate = phosphoenolpyruvate + hydrogencarbonate. Its activity is regulated as follows. By light-reversible phosphorylation. In terms of biological role, through the carboxylation of phosphoenolpyruvate (PEP) it forms oxaloacetate, a four-carbon dicarboxylic acid source for the tricarboxylic acid cycle. This Picea abies (Norway spruce) protein is Phosphoenolpyruvate carboxylase (PPC).